Consider the following 177-residue polypeptide: MATIVKKQETIQDKDQVKAYLTQKGLVYESYKTPESLDLILGQKGLSDAEKEEVLSGLEYRFDQLKKQHGYKANDLVVLHDEVPGISDMLAKFDKLHIHTDEEVRYIIDGSGIFGFIIDGERFEVHVGKGDFISIPANTNHWFTLDQTMRIKAVRYFKDNSGWTPVYVDESKVLINA.

His-97, His-99, Glu-103, and His-141 together coordinate Fe(2+). The Ni(2+) site is built by His-97, His-99, Glu-103, and His-141.

It belongs to the acireductone dioxygenase (ARD) family. As to quaternary structure, monomer. Fe(2+) serves as cofactor. The cofactor is Ni(2+).

It catalyses the reaction 1,2-dihydroxy-5-(methylsulfanyl)pent-1-en-3-one + O2 = 3-(methylsulfanyl)propanoate + CO + formate + 2 H(+). It carries out the reaction 1,2-dihydroxy-5-(methylsulfanyl)pent-1-en-3-one + O2 = 4-methylsulfanyl-2-oxobutanoate + formate + 2 H(+). It functions in the pathway amino-acid biosynthesis; L-methionine biosynthesis via salvage pathway; L-methionine from S-methyl-5-thio-alpha-D-ribose 1-phosphate: step 5/6. Catalyzes 2 different reactions between oxygen and the acireductone 1,2-dihydroxy-3-keto-5-methylthiopentene (DHK-MTPene) depending upon the metal bound in the active site. Fe-containing acireductone dioxygenase (Fe-ARD) produces formate and 2-keto-4-methylthiobutyrate (KMTB), the alpha-ketoacid precursor of methionine in the methionine recycle pathway. Ni-containing acireductone dioxygenase (Ni-ARD) produces methylthiopropionate, carbon monoxide and formate, and does not lie on the methionine recycle pathway. In Leptospira biflexa serovar Patoc (strain Patoc 1 / ATCC 23582 / Paris), this protein is Acireductone dioxygenase.